The following is a 701-amino-acid chain: DC-STAMP domain-containing protein 2 (701 aa).

4 consecutive transmembrane segments (helical) span residues 15–35 (TCGFTVGLSLATAFGLLELLG), 40–60 (PFGCLVTTVTLAAFLSLGMGF), 82–102 (LLLLVASFGLVLQGPCANTLQ), and 215–235 (FPHLCYALLPYKLLVCGLASL). N-linked (GlcNAc...) asparagine glycosylation is found at N272 and N284. The next 2 membrane-spanning stretches (helical) occupy residues 310-330 (ALSLMGYTMPLLIGFLYIQAL) and 404-424 (LLIMLLLVFLDYGVFWLLDLA). N468 carries N-linked (GlcNAc...) asparagine glycosylation. Residues 488 to 508 (YIVIGTMYGLCFFVTLFGSYV) form a helical membrane-spanning segment. A disordered region spans residues 673–701 (LQEALGTNLSDKSTSKPERAGNRNQDRKQ). The span at 685–701 (STSKPERAGNRNQDRKQ) shows a compositional bias: basic and acidic residues.

As to quaternary structure, interacts with DCST1. Expressed in testis.

The protein resides in the cytoplasmic vesicle. It localises to the secretory vesicle. It is found in the acrosome membrane. In terms of biological role, essential sperm cell-surface protein required for sperm-egg fusion and fertilization. This is DC-STAMP domain-containing protein 2 from Mus musculus (Mouse).